The following is a 94-amino-acid chain: Aspartyl/glutamyl-tRNA(Asn/Gln) amidotransferase subunit C (94 aa).

The protein belongs to the GatC family. In terms of assembly, heterotrimer of A, B and C subunits.

It catalyses the reaction L-glutamyl-tRNA(Gln) + L-glutamine + ATP + H2O = L-glutaminyl-tRNA(Gln) + L-glutamate + ADP + phosphate + H(+). It carries out the reaction L-aspartyl-tRNA(Asn) + L-glutamine + ATP + H2O = L-asparaginyl-tRNA(Asn) + L-glutamate + ADP + phosphate + 2 H(+). Allows the formation of correctly charged Asn-tRNA(Asn) or Gln-tRNA(Gln) through the transamidation of misacylated Asp-tRNA(Asn) or Glu-tRNA(Gln) in organisms which lack either or both of asparaginyl-tRNA or glutaminyl-tRNA synthetases. The reaction takes place in the presence of glutamine and ATP through an activated phospho-Asp-tRNA(Asn) or phospho-Glu-tRNA(Gln). The protein is Aspartyl/glutamyl-tRNA(Asn/Gln) amidotransferase subunit C of Syntrophomonas wolfei subsp. wolfei (strain DSM 2245B / Goettingen).